Consider the following 644-residue polypeptide: Protein SNOWY COTYLEDON 3 (644 aa).

Disordered regions lie at residues 1–129 (MVAA…TRTE), 162–252 (ETAT…DGRL), and 290–414 (SDTD…SRVR). Low complexity predominate over residues 53–77 (SPSPSHSTTTTTTTATSTSTSSSSS). The segment covering 91–112 (LSRTTNSASNLVYTPSSLPKRS) has biased composition (polar residues). The segment covering 172-190 (CTPERRRATPVRDQRENSK) has biased composition (basic and acidic residues). 2 stretches are compositionally biased toward polar residues: residues 290 to 302 (SDTDSVSSGSTNG) and 314 to 332 (TRSLPRNGMASTKFWQETN). Low complexity-rich tracts occupy residues 343-370 (SPQCSSPSSRISSISSKFSQSKRFSSDS) and 397-412 (ATATSAPARTSSSPSR). The QWRF motif motif lies at 463–466 (QWRF).

This sequence belongs to the QWRF family. In terms of tissue distribution, expressed in young developing tissues, such as seedlings, roots, flowers, buds and young siliques, and to a lesser extent in mature green tissues.

It localises to the peroxisome. Probable microtubule-associated peroxisomal protein required for chloroplast biogenesis and for the formation of the prolamellar body and prothylakoids in etioplasts. Not involved in peroxisomal metabolism, including mobilization of storage compounds during germination, fatty acid beta-oxydation or photorespiration. The protein is Protein SNOWY COTYLEDON 3 (SCO3) of Arabidopsis thaliana (Mouse-ear cress).